Reading from the N-terminus, the 134-residue chain is Insulin-like peptide 4 (134 aa).

Residues 1-26 form the signal peptide; it reads MSLIRLGLALLLLLATVSQLLQPVQG. Cystine bridges form between Cys31–Cys120, Cys43–Cys133, and Cys119–Cys124. Positions 54-108 are cleaved as a propeptide — connecting peptide; the sequence is SSASKDARVRDLIRKLQQPDEDIEQETETGRLKQKHTDADTEKGVPPAVGSGRKL. The tract at residues 72 to 107 is disordered; the sequence is PDEDIEQETETGRLKQKHTDADTEKGVPPAVGSGRK. A compositionally biased stretch (basic and acidic residues) spans 81 to 96; it reads ETGRLKQKHTDADTEK.

Belongs to the insulin family. In terms of assembly, heterodimer of a B chain and an A chain linked by two disulfide bonds. As to expression, expressed at a high level in the embryonic mesoderm, with expression continuing after gastrulation and reducing from stage 12 onwards. Highly expressed in the embryonic anterior midgut rudiment and larval midgut.

The protein resides in the secreted. Its function is as follows. Possible ligand of InR/insulin-like receptor. The chain is Insulin-like peptide 4 from Drosophila melanogaster (Fruit fly).